A 301-amino-acid chain; its full sequence is Lipoyl synthase (301 aa).

Residues C37, C42, C48, C63, C67, C70, and S276 each coordinate [4Fe-4S] cluster. The Radical SAM core domain maps to 49 to 265 (WSKKHATVMI…ERIARTKGFL (217 aa)).

This sequence belongs to the radical SAM superfamily. Lipoyl synthase family. [4Fe-4S] cluster serves as cofactor.

The protein localises to the cytoplasm. The catalysed reaction is [[Fe-S] cluster scaffold protein carrying a second [4Fe-4S](2+) cluster] + N(6)-octanoyl-L-lysyl-[protein] + 2 oxidized [2Fe-2S]-[ferredoxin] + 2 S-adenosyl-L-methionine + 4 H(+) = [[Fe-S] cluster scaffold protein] + N(6)-[(R)-dihydrolipoyl]-L-lysyl-[protein] + 4 Fe(3+) + 2 hydrogen sulfide + 2 5'-deoxyadenosine + 2 L-methionine + 2 reduced [2Fe-2S]-[ferredoxin]. It participates in protein modification; protein lipoylation via endogenous pathway; protein N(6)-(lipoyl)lysine from octanoyl-[acyl-carrier-protein]: step 2/2. Catalyzes the radical-mediated insertion of two sulfur atoms into the C-6 and C-8 positions of the octanoyl moiety bound to the lipoyl domains of lipoate-dependent enzymes, thereby converting the octanoylated domains into lipoylated derivatives. This chain is Lipoyl synthase, found in Rickettsia felis (strain ATCC VR-1525 / URRWXCal2) (Rickettsia azadi).